We begin with the raw amino-acid sequence, 1588 residues long: Pentafunctional AROM polypeptide (1588 aa).

Positions 1-392 (MVQLAKVPIL…YGDSAQFVSD (392 aa)) are 3-dehydroquinate synthase. NAD(+) is bound by residues 43–45 (DTN), 78–81 (ETSK), 109–111 (GGV), and D114. R125 is a binding site for 7-phospho-2-dehydro-3-deoxy-D-arabino-heptonate. 134 to 135 (TS) is a binding site for NAD(+). 7-phospho-2-dehydro-3-deoxy-D-arabino-heptonate is bound by residues D141 and K147. Position 156 (K156) interacts with NAD(+). N157 is a 7-phospho-2-dehydro-3-deoxy-D-arabino-heptonate binding site. Residues 174–177 (WLET) and N185 contribute to the NAD(+) site. E189 provides a ligand contact to Zn(2+). 7-phospho-2-dehydro-3-deoxy-D-arabino-heptonate-binding positions include 189–192 (EVIK) and K258. The active-site Proton acceptor; for 3-dehydroquinate synthase activity is E268. Residues 272–276 (RNLLN) and H279 contribute to the 7-phospho-2-dehydro-3-deoxy-D-arabino-heptonate site. H279 contacts Zn(2+). H283 (proton acceptor; for 3-dehydroquinate synthase activity) is an active-site residue. H295 and K364 together coordinate 7-phospho-2-dehydro-3-deoxy-D-arabino-heptonate. A Zn(2+)-binding site is contributed by H295. Positions 405–871 (VYPFKDIPAD…WDVLHSELGA (467 aa)) are EPSP synthase. C853 functions as the For EPSP synthase activity in the catalytic mechanism. Residues 890-1080 (SVVIIGMRAA…IPSGRSAFVC (191 aa)) are shikimate kinase. An ATP-binding site is contributed by 895–902 (GMRAAGKT). Residues 1081–1293 (LTFDDLTEQT…AAPGQLTVAQ (213 aa)) are 3-dehydroquinase. The active-site Proton acceptor; for 3-dehydroquinate dehydratase activity is H1198. Catalysis depends on K1227, which acts as the Schiff-base intermediate with substrate; for 3-dehydroquinate dehydratase activity. The tract at residues 1306 to 1588 (PKELFVVGKP…KAIFDAVTKE (283 aa)) is shikimate dehydrogenase.

The protein in the N-terminal section; belongs to the sugar phosphate cyclases superfamily. Dehydroquinate synthase family. It in the 2nd section; belongs to the EPSP synthase family. This sequence in the 3rd section; belongs to the shikimate kinase family. In the 4th section; belongs to the type-I 3-dehydroquinase family. The protein in the C-terminal section; belongs to the shikimate dehydrogenase family. As to quaternary structure, homodimer. Requires Zn(2+) as cofactor.

Its subcellular location is the cytoplasm. It catalyses the reaction 7-phospho-2-dehydro-3-deoxy-D-arabino-heptonate = 3-dehydroquinate + phosphate. It carries out the reaction 3-dehydroquinate = 3-dehydroshikimate + H2O. The enzyme catalyses shikimate + NADP(+) = 3-dehydroshikimate + NADPH + H(+). The catalysed reaction is shikimate + ATP = 3-phosphoshikimate + ADP + H(+). It catalyses the reaction 3-phosphoshikimate + phosphoenolpyruvate = 5-O-(1-carboxyvinyl)-3-phosphoshikimate + phosphate. It functions in the pathway metabolic intermediate biosynthesis; chorismate biosynthesis; chorismate from D-erythrose 4-phosphate and phosphoenolpyruvate: step 2/7. The protein operates within metabolic intermediate biosynthesis; chorismate biosynthesis; chorismate from D-erythrose 4-phosphate and phosphoenolpyruvate: step 3/7. It participates in metabolic intermediate biosynthesis; chorismate biosynthesis; chorismate from D-erythrose 4-phosphate and phosphoenolpyruvate: step 4/7. Its pathway is metabolic intermediate biosynthesis; chorismate biosynthesis; chorismate from D-erythrose 4-phosphate and phosphoenolpyruvate: step 5/7. It functions in the pathway metabolic intermediate biosynthesis; chorismate biosynthesis; chorismate from D-erythrose 4-phosphate and phosphoenolpyruvate: step 6/7. The AROM polypeptide catalyzes 5 consecutive enzymatic reactions in prechorismate polyaromatic amino acid biosynthesis. The sequence is that of Pentafunctional AROM polypeptide from Saccharomyces cerevisiae (strain YJM789) (Baker's yeast).